Here is a 175-residue protein sequence, read N- to C-terminus: NAD(P)H-quinone oxidoreductase subunit J (175 aa).

The protein belongs to the complex I 30 kDa subunit family. NDH-1 can be composed of about 15 different subunits; different subcomplexes with different compositions have been identified which probably have different functions.

It localises to the cellular thylakoid membrane. The enzyme catalyses a plastoquinone + NADH + (n+1) H(+)(in) = a plastoquinol + NAD(+) + n H(+)(out). It carries out the reaction a plastoquinone + NADPH + (n+1) H(+)(in) = a plastoquinol + NADP(+) + n H(+)(out). In terms of biological role, NDH-1 shuttles electrons from an unknown electron donor, via FMN and iron-sulfur (Fe-S) centers, to quinones in the respiratory and/or the photosynthetic chain. The immediate electron acceptor for the enzyme in this species is believed to be plastoquinone. Couples the redox reaction to proton translocation, and thus conserves the redox energy in a proton gradient. Cyanobacterial NDH-1 also plays a role in inorganic carbon-concentration. The chain is NAD(P)H-quinone oxidoreductase subunit J from Trichormus variabilis (strain ATCC 29413 / PCC 7937) (Anabaena variabilis).